The sequence spans 134 residues: Retinol-binding protein 2 (134 aa).

Positions 41 and 109 each coordinate all-trans-retinol.

Belongs to the calycin superfamily. Fatty-acid binding protein (FABP) family.

The protein localises to the cytoplasm. In terms of biological role, intracellular transport of retinol. This chain is Retinol-binding protein 2 (RBP2), found in Sus scrofa (Pig).